Here is a 307-residue protein sequence, read N- to C-terminus: S-methyl-5'-thioadenosine phosphorylase (307 aa).

Phosphate is bound by residues threonine 20, 62 to 63 (RH), and 95 to 96 (SA). A substrate-binding site is contributed by methionine 197. A phosphate-binding site is contributed by serine 198. Residue 221–223 (DYD) coordinates substrate.

Belongs to the PNP/MTAP phosphorylase family. MTAP subfamily. In terms of assembly, homotrimer.

The protein resides in the cytoplasm. The protein localises to the nucleus. The catalysed reaction is S-methyl-5'-thioadenosine + phosphate = 5-(methylsulfanyl)-alpha-D-ribose 1-phosphate + adenine. Its pathway is amino-acid biosynthesis; L-methionine biosynthesis via salvage pathway; S-methyl-5-thio-alpha-D-ribose 1-phosphate from S-methyl-5'-thioadenosine (phosphorylase route): step 1/1. Its function is as follows. Catalyzes the reversible phosphorylation of S-methyl-5'-thioadenosine (MTA) to adenine and 5-methylthioribose-1-phosphate. Involved in the breakdown of MTA, a major by-product of polyamine biosynthesis. Responsible for the first step in the methionine salvage pathway after MTA has been generated from S-adenosylmethionine. Has broad substrate specificity with 6-aminopurine nucleosides as preferred substrates. This is S-methyl-5'-thioadenosine phosphorylase from Fusarium vanettenii (strain ATCC MYA-4622 / CBS 123669 / FGSC 9596 / NRRL 45880 / 77-13-4) (Fusarium solani subsp. pisi).